A 368-amino-acid polypeptide reads, in one-letter code: Membrane glycoprotein UL18 (368 aa).

The signal sequence occupies residues 1-19 (MMTMWCLTLFVLWMLRVVG). The helical transmembrane segment at 326–346 (ISSVLLALLLCALLFAFLHYF) threads the bilayer.

In terms of assembly, interacts with host LILRB1.

It localises to the host membrane. Plays a role in the protection against host NK cell cytotoxicity by interacting with and modulating the activity of the host inhibitory leukocyte Ig-like receptor 1/LILRB1, which is expressed on monocytes, dendritic cells, as well as subsets of T and NK cells. UL18 exerts an inhibitory effect on LIR-1+ NK cells, while it stimulates LIR-1- NK cell. The chain is Membrane glycoprotein UL18 (UL18) from Homo sapiens (Human).